A 468-amino-acid polypeptide reads, in one-letter code: ATP-dependent protease ATPase subunit HslU (468 aa).

ATP-binding positions include Val-22 and 64–69 (GVGKTE). Positions 166-187 (FGNNDEEDEEPPTEDIKTKRSE) are disordered. Residues 169 to 178 (NDEEDEEPPT) are compositionally biased toward acidic residues. Asp-281, Glu-346, and Arg-418 together coordinate ATP.

This sequence belongs to the ClpX chaperone family. HslU subfamily. In terms of assembly, a double ring-shaped homohexamer of HslV is capped on each side by a ring-shaped HslU homohexamer. The assembly of the HslU/HslV complex is dependent on binding of ATP.

It localises to the cytoplasm. In terms of biological role, ATPase subunit of a proteasome-like degradation complex; this subunit has chaperone activity. The binding of ATP and its subsequent hydrolysis by HslU are essential for unfolding of protein substrates subsequently hydrolyzed by HslV. HslU recognizes the N-terminal part of its protein substrates and unfolds these before they are guided to HslV for hydrolysis. The protein is ATP-dependent protease ATPase subunit HslU of Staphylococcus carnosus (strain TM300).